Here is a 127-residue protein sequence, read N- to C-terminus: Protein ApaG (127 aa).

In terms of domain architecture, ApaG spans Glu3–His127.

In Thiobacillus denitrificans (strain ATCC 25259 / T1), this protein is Protein ApaG.